A 427-amino-acid chain; its full sequence is MSVSFENKETNRGLLTFSISQEKIKPALDRVFNSVKKDIAVPGFRKGRLPRAIFNQRFGEEALYQDALNALLPEAYEAAVKEAGIEVVAQPQFDVESMEKGQDWVIKAEVVTKPEVKLGAYKDLEVTVEATKEVTDAEVDERIERERNNLAELVLKEGPAADGDTVVIDFVGSVDGVEFDGGKGDNFSLGLGSGQFIPGFEEQLVGHSAGETVDVVVTFPEDYQAEDLAGKEAKFVTTIHEVKEKEVPALDDELAKDIDEEVETLDELKEKYRKELSEAKETAYKDAVEAAAIDQAVANAEIVDLPAEMVHEEVHRAVNEFLGNMQRQGISPDMYFQITGTTQEDLHKQYEADAESRTKTNLVVEAVAKAEGFEASAEEIEAEVTSLASDYNMEVERVRQLLSEDMLKHDIAIKKAVELITSTAKVK.

In terms of domain architecture, PPIase FKBP-type spans 163–248; the sequence is GDTVVIDFVG…IHEVKEKEVP (86 aa).

Belongs to the FKBP-type PPIase family. Tig subfamily.

It localises to the cytoplasm. It catalyses the reaction [protein]-peptidylproline (omega=180) = [protein]-peptidylproline (omega=0). Involved in protein export. Acts as a chaperone by maintaining the newly synthesized protein in an open conformation. Functions as a peptidyl-prolyl cis-trans isomerase. In Streptococcus sanguinis (strain SK36), this protein is Trigger factor.